Consider the following 372-residue polypeptide: Aminomethyltransferase (372 aa).

It belongs to the GcvT family. As to quaternary structure, the glycine cleavage system is composed of four proteins: P, T, L and H.

The enzyme catalyses N(6)-[(R)-S(8)-aminomethyldihydrolipoyl]-L-lysyl-[protein] + (6S)-5,6,7,8-tetrahydrofolate = N(6)-[(R)-dihydrolipoyl]-L-lysyl-[protein] + (6R)-5,10-methylene-5,6,7,8-tetrahydrofolate + NH4(+). The glycine cleavage system catalyzes the degradation of glycine. This Burkholderia cenocepacia (strain ATCC BAA-245 / DSM 16553 / LMG 16656 / NCTC 13227 / J2315 / CF5610) (Burkholderia cepacia (strain J2315)) protein is Aminomethyltransferase.